A 467-amino-acid polypeptide reads, in one-letter code: Mothers against decapentaplegic homolog 9 (467 aa).

The MH1 domain occupies 16–140 (PAVKRLLGWK…YRRVETPVLP (125 aa)). Residues C68, C113, C125, and H130 each coordinate Zn(2+). Residues 174–246 (NATYPDSFQQ…SETQSGQPVD (73 aa)) are disordered. Residues 205–220 (SYPHSPGSPSEPESPY) are compositionally biased toward low complexity. The MH2 domain occupies 273-467 (WCSVAYYELN…SPHNPISSVS (195 aa)).

This sequence belongs to the dwarfin/SMAD family. As to quaternary structure, interaction with the co-SMAD SMAD4. Interacts with PEBP2-alpha subunit. Interacts with RANBP3L. Post-translationally, phosphorylated on serine by BMP (bone morphogenetic proteins) type 1 receptor kinase. As to expression, expressed in heart, brain, placenta, lung, skeletal muscle, prostate, testis, ovary and small intestine. Also expressed in fetal brain, lung and kidney.

Its subcellular location is the cytoplasm. The protein resides in the nucleus. Functionally, transcriptional modulator activated by BMP (bone morphogenetic proteins) type 1 receptor kinase. SMAD9 is a receptor-regulated SMAD (R-SMAD). This chain is Mothers against decapentaplegic homolog 9 (SMAD9), found in Homo sapiens (Human).